Here is a 348-residue protein sequence, read N- to C-terminus: MKPTDLAFDTVRAVLWDGTSLKLLDQRRLPRETVYLDIPDVGAAADAIREMVVRGAPAIGITAAYGVVLAARRLPADTPDWLDALTPDLERLAASRPTAVNLFWALARMKSVIGQVGADLPARLEAEARRIHEDDLADNRRMGELGAALMDPAEAVLTHCNTGSLATGGYGTALGVIRSAYGQQRIKKVYADETRPWLQGARLTAWELVQDGIPVDLICEGAAASLMRSGRVGWVVVGADRIAANGDTANKIGTYALAVLARHHGVRFMVVAPTSTIDMDTPDGAGIPIEERPVSEVLGLAGQPVAAEGAGAWNPAFDVTPAELIDAIVTEKGVVERPDRAKMTALMK.

Substrate contacts are provided by residues 54-56 (RGA), Arg-96, and Gln-199. Asp-240 serves as the catalytic Proton donor. 250–251 (NK) is a substrate binding site.

This sequence belongs to the eIF-2B alpha/beta/delta subunits family. MtnA subfamily.

It catalyses the reaction 5-(methylsulfanyl)-alpha-D-ribose 1-phosphate = 5-(methylsulfanyl)-D-ribulose 1-phosphate. It functions in the pathway amino-acid biosynthesis; L-methionine biosynthesis via salvage pathway; L-methionine from S-methyl-5-thio-alpha-D-ribose 1-phosphate: step 1/6. In terms of biological role, catalyzes the interconversion of methylthioribose-1-phosphate (MTR-1-P) into methylthioribulose-1-phosphate (MTRu-1-P). The protein is Methylthioribose-1-phosphate isomerase of Thioalkalivibrio sulfidiphilus (strain HL-EbGR7).